We begin with the raw amino-acid sequence, 152 residues long: Deoxyuridine 5'-triphosphate nucleotidohydrolase (152 aa).

Substrate-binding positions include 71–73 (RSG), Asn-84, 88–90 (LID), and Met-98.

This sequence belongs to the dUTPase family. Mg(2+) is required as a cofactor.

It carries out the reaction dUTP + H2O = dUMP + diphosphate + H(+). It participates in pyrimidine metabolism; dUMP biosynthesis; dUMP from dCTP (dUTP route): step 2/2. In terms of biological role, this enzyme is involved in nucleotide metabolism: it produces dUMP, the immediate precursor of thymidine nucleotides and it decreases the intracellular concentration of dUTP so that uracil cannot be incorporated into DNA. This is Deoxyuridine 5'-triphosphate nucleotidohydrolase from Klebsiella pneumoniae (strain 342).